A 71-amino-acid chain; its full sequence is Conotoxin Vc6.12 (71 aa).

The first 19 residues, 1 to 19 (MQKLIILLLVAAVLMSTQA), serve as a signal peptide directing secretion. The propeptide occupies 20-43 (LFQEKRPMKKINFLSKGKTDAEKQ). 3 cysteine pairs are disulfide-bonded: Cys-48–Cys-62, Cys-55–Cys-66, and Cys-61–Cys-70.

Belongs to the conotoxin O2 superfamily. As to expression, expressed by the venom duct.

It localises to the secreted. Inhibits voltage-gated ion channels. The polypeptide is Conotoxin Vc6.12 (Conus victoriae (Queen Victoria cone)).